The following is a 252-amino-acid chain: Putative pinene synthase (252 aa).

Belongs to the terpene synthase family. Tpsa subfamily.

This is Putative pinene synthase from Fragaria ananassa (Strawberry).